The primary structure comprises 83 residues: Large ribosomal subunit protein eL37 (83 aa).

Zn(2+) is bound by residues C19, C22, C34, and C37. The segment at C19–C37 adopts a C4-type zinc-finger fold.

It belongs to the eukaryotic ribosomal protein eL37 family. Zn(2+) serves as cofactor.

Its function is as follows. Binds to the 23S rRNA. The polypeptide is Large ribosomal subunit protein eL37 (RPL37) (Leishmania donovani).